Consider the following 224-residue polypeptide: uncharacterized protein (224 aa).

Residues Met1–Ala30 form the signal peptide. N-linked (GlcNAc...) asparagine glycosylation is present at Asn141.

Its subcellular location is the secreted. This is an uncharacterized protein from Oryza sativa subsp. japonica (Rice).